The sequence spans 558 residues: Cytochrome c oxidase subunit 1-beta (558 aa).

Residues Met1–His28 lie on the Cytoplasmic side of the membrane. A helical membrane pass occupies residues Lys29–His59. Over Pro60–Pro82 the chain is Periplasmic. A disulfide bond links Cys66 and Cys80. The chain crosses the membrane as a helical span at residues Asn83–Ile120. Position 94 (His94) interacts with Fe(II)-heme a. The Cytoplasmic portion of the chain corresponds to Gly121–Ala126. Residues Phe127 to Ala151 traverse the membrane as a helical segment. Residues Pro152–Gly176 are Periplasmic-facing. The chain crosses the membrane as a helical span at residues Tyr177 to Asn206. At Met207–Val217 the chain is on the cytoplasmic side. A helical transmembrane segment spans residues Pro218–Phe251. Residues Gly252 to Gly262 are Periplasmic-facing. The helical transmembrane segment at Asp263–Lys299 threads the bilayer. Cu cation contacts are provided by His276 and Tyr280. A cross-link (1'-histidyl-3'-tyrosine (His-Tyr)) is located at residues His276–Tyr280. Topologically, residues Lys300–Phe303 are cytoplasmic. The chain crosses the membrane as a helical span at residues Gly304–Gly331. Cu cation-binding residues include His325 and His326. A topological domain (periplasmic) is located at residue Met332. The helical transmembrane segment at Ser333–Gly364 threads the bilayer. Over Gly365 to Phe369 the chain is Cytoplasmic. Residues Lys370–Gln395 traverse the membrane as a helical segment. Residues Ala396–Asp404 lie on the Periplasmic side of the membrane. A helical membrane pass occupies residues Thr405 to Gly437. Position 411 (His411) interacts with heme a3. His413 provides a ligand contact to Fe(II)-heme a. Over Arg438 to Tyr440 the chain is Cytoplasmic. Residues Pro441–Gln469 traverse the membrane as a helical segment. Topologically, residues Gly470–Tyr478 are periplasmic. A helical membrane pass occupies residues Pro479 to Gly514. The Cytoplasmic portion of the chain corresponds to Lys515–His558.

This sequence belongs to the heme-copper respiratory oxidase family. It depends on Cu(2+) as a cofactor. Heme is required as a cofactor. In terms of processing, his-276 and Tyr-280 are involved in the formation of a copper-coordinated covalent cross-link at the active site of the catalytic subunit I.

It is found in the cell inner membrane. It catalyses the reaction 4 Fe(II)-[cytochrome c] + O2 + 8 H(+)(in) = 4 Fe(III)-[cytochrome c] + 2 H2O + 4 H(+)(out). It functions in the pathway energy metabolism; oxidative phosphorylation. Its function is as follows. Subunit I and II form the functional core of the enzyme complex. Electrons originating in cytochrome c are transferred via heme a and Cu(A) to the binuclear center formed by heme a3 and Cu(B). This cytochrome c oxidase shows proton pump activity across the membrane in addition to the electron transfer. In Paracoccus denitrificans, this protein is Cytochrome c oxidase subunit 1-beta (ctaDII).